We begin with the raw amino-acid sequence, 329 residues long: Lipoyl synthase (329 aa).

Residues Cys72, Cys77, Cys83, Cys98, Cys102, Cys105, and Ser313 each coordinate [4Fe-4S] cluster. Positions 83 to 303 (CWSHGTATIM…QIGLKKGFFE (221 aa)) constitute a Radical SAM core domain.

It belongs to the radical SAM superfamily. Lipoyl synthase family. [4Fe-4S] cluster is required as a cofactor.

It is found in the cytoplasm. The enzyme catalyses [[Fe-S] cluster scaffold protein carrying a second [4Fe-4S](2+) cluster] + N(6)-octanoyl-L-lysyl-[protein] + 2 oxidized [2Fe-2S]-[ferredoxin] + 2 S-adenosyl-L-methionine + 4 H(+) = [[Fe-S] cluster scaffold protein] + N(6)-[(R)-dihydrolipoyl]-L-lysyl-[protein] + 4 Fe(3+) + 2 hydrogen sulfide + 2 5'-deoxyadenosine + 2 L-methionine + 2 reduced [2Fe-2S]-[ferredoxin]. The protein operates within protein modification; protein lipoylation via endogenous pathway; protein N(6)-(lipoyl)lysine from octanoyl-[acyl-carrier-protein]: step 2/2. Its function is as follows. Catalyzes the radical-mediated insertion of two sulfur atoms into the C-6 and C-8 positions of the octanoyl moiety bound to the lipoyl domains of lipoate-dependent enzymes, thereby converting the octanoylated domains into lipoylated derivatives. This chain is Lipoyl synthase, found in Legionella pneumophila (strain Paris).